The sequence spans 306 residues: MGCDGGTIPKRHELVKGPKKVEKVDKDAELVAQWNYCTLSQEILRRPIVACELGRLYNKDAVIEFLLDKSAEKALGKAASHIKSIKNVTELKLSDNPAWEGDKGNTKGDKHDDLQRARFICPVVGLEMNGRHRFCFLRCCGCVFSERALKEIKAEVCHTCGAAFQEDDVIMLNGTKEDVDVLKTRMEERRLRAKLEKKTKKPKAAESVSKPDVSEEAPGPSKVKTGKPEEASLDSREKKTNLAPKSTAMNESSSGKAGKPPCGATKRSIADSEESEAYKSLFTTHSSAKRSKEESAHWVTHTSYCF.

The interval 193 to 276 is disordered; it reads AKLEKKTKKP…RSIADSEESE (84 aa). Residues 226-240 are compositionally biased toward basic and acidic residues; the sequence is GKPEEASLDSREKKT. The segment covering 243–255 has biased composition (polar residues); sequence APKSTAMNESSSG. A Phosphoserine modification is found at S287.

This sequence belongs to the rtf2 family. Interacts with DDI2; probably also interacts with DDI1. Undergoes proteasomal degradation, via DDI1 and DDI2. Removal from stalled replisomes and degradation are required for genome stability.

The protein resides in the chromosome. Replication termination factor which is a component of the elongating replisome. Required for ATR pathway signaling upon DNA damage and has a positive activity during DNA replication. Might function to facilitate fork pausing at replication fork barriers like the rDNA. May be globally required to stimulate ATR signaling after the fork stalls or encounters a lesion. Interacts with nascent DNA. The polypeptide is Replication termination factor 2 (Homo sapiens (Human)).